Here is a 221-residue protein sequence, read N- to C-terminus: Chalcone--flavanone isomerase (221 aa).

Residues Thr52, Asn117, and Ser193 each contribute to the substrate site.

This sequence belongs to the chalcone isomerase family. As to expression, flowers.

It carries out the reaction a chalcone = a flavanone.. It functions in the pathway secondary metabolite biosynthesis; flavonoid biosynthesis. Functionally, catalyzes the intramolecular cyclization of bicyclic chalcones into tricyclic (S)-flavanones. Responsible for the isomerization of 4,2',4',6'-tetrahydroxychalcone (also termed chalcone) into naringenin. The polypeptide is Chalcone--flavanone isomerase (CHI) (Gentiana triflora (Clustered gentian)).